The sequence spans 213 residues: Small ribosomal subunit protein uS3 (213 aa).

One can recognise a KH type-2 domain in the interval 38–106; the sequence is IRAFVKKLLY…EFSLEVNEIR (69 aa).

The protein belongs to the universal ribosomal protein uS3 family. As to quaternary structure, part of the 30S ribosomal subunit. Forms a tight complex with proteins S10 and S14.

Its function is as follows. Binds the lower part of the 30S subunit head. Binds mRNA in the 70S ribosome, positioning it for translation. This Desulfovibrio desulfuricans (strain ATCC 27774 / DSM 6949 / MB) protein is Small ribosomal subunit protein uS3.